A 452-amino-acid polypeptide reads, in one-letter code: Bifunctional protein GlmU (452 aa).

Residues 1–225 (MEVVILAAGQ…VSETLGVNSK (225 aa)) form a pyrophosphorylase region. Residues 6–9 (LAAG), Lys-20, Gln-71, 76–77 (GT), 98–100 (YGD), Gly-135, Glu-150, Asn-165, and Asn-223 contribute to the UDP-N-acetyl-alpha-D-glucosamine site. Asp-100 provides a ligand contact to Mg(2+). Asn-223 contacts Mg(2+). The segment at 226–246 (PQLAELERIHQRNIAQRLMED) is linker. The interval 247–452 (GVTLIDPARI…AGWKRPVKQR (206 aa)) is N-acetyltransferase. UDP-N-acetyl-alpha-D-glucosamine contacts are provided by Arg-329 and Lys-347. His-359 acts as the Proton acceptor in catalysis. 2 residues coordinate UDP-N-acetyl-alpha-D-glucosamine: Tyr-362 and Asn-373. Residues Ala-376, 382-383 (NY), Ser-401, Ala-419, and Arg-436 contribute to the acetyl-CoA site.

The protein in the N-terminal section; belongs to the N-acetylglucosamine-1-phosphate uridyltransferase family. This sequence in the C-terminal section; belongs to the transferase hexapeptide repeat family. Homotrimer. Mg(2+) serves as cofactor.

Its subcellular location is the cytoplasm. It carries out the reaction alpha-D-glucosamine 1-phosphate + acetyl-CoA = N-acetyl-alpha-D-glucosamine 1-phosphate + CoA + H(+). The enzyme catalyses N-acetyl-alpha-D-glucosamine 1-phosphate + UTP + H(+) = UDP-N-acetyl-alpha-D-glucosamine + diphosphate. The protein operates within nucleotide-sugar biosynthesis; UDP-N-acetyl-alpha-D-glucosamine biosynthesis; N-acetyl-alpha-D-glucosamine 1-phosphate from alpha-D-glucosamine 6-phosphate (route II): step 2/2. It functions in the pathway nucleotide-sugar biosynthesis; UDP-N-acetyl-alpha-D-glucosamine biosynthesis; UDP-N-acetyl-alpha-D-glucosamine from N-acetyl-alpha-D-glucosamine 1-phosphate: step 1/1. Its pathway is bacterial outer membrane biogenesis; LPS lipid A biosynthesis. Functionally, catalyzes the last two sequential reactions in the de novo biosynthetic pathway for UDP-N-acetylglucosamine (UDP-GlcNAc). The C-terminal domain catalyzes the transfer of acetyl group from acetyl coenzyme A to glucosamine-1-phosphate (GlcN-1-P) to produce N-acetylglucosamine-1-phosphate (GlcNAc-1-P), which is converted into UDP-GlcNAc by the transfer of uridine 5-monophosphate (from uridine 5-triphosphate), a reaction catalyzed by the N-terminal domain. The polypeptide is Bifunctional protein GlmU (Azoarcus sp. (strain BH72)).